A 486-amino-acid polypeptide reads, in one-letter code: Aspartyl/glutamyl-tRNA(Asn/Gln) amidotransferase subunit B (486 aa).

The protein belongs to the GatB/GatE family. GatB subfamily. In terms of assembly, heterotrimer of A, B and C subunits.

It carries out the reaction L-glutamyl-tRNA(Gln) + L-glutamine + ATP + H2O = L-glutaminyl-tRNA(Gln) + L-glutamate + ADP + phosphate + H(+). The catalysed reaction is L-aspartyl-tRNA(Asn) + L-glutamine + ATP + H2O = L-asparaginyl-tRNA(Asn) + L-glutamate + ADP + phosphate + 2 H(+). Allows the formation of correctly charged Asn-tRNA(Asn) or Gln-tRNA(Gln) through the transamidation of misacylated Asp-tRNA(Asn) or Glu-tRNA(Gln) in organisms which lack either or both of asparaginyl-tRNA or glutaminyl-tRNA synthetases. The reaction takes place in the presence of glutamine and ATP through an activated phospho-Asp-tRNA(Asn) or phospho-Glu-tRNA(Gln). The protein is Aspartyl/glutamyl-tRNA(Asn/Gln) amidotransferase subunit B of Orientia tsutsugamushi (strain Ikeda) (Rickettsia tsutsugamushi).